The sequence spans 110 residues: Flagellar hook-basal body complex protein FliE (110 aa).

Belongs to the FliE family.

The protein localises to the bacterial flagellum basal body. The protein is Flagellar hook-basal body complex protein FliE of Pseudomonas entomophila (strain L48).